We begin with the raw amino-acid sequence, 62 residues long: Protein translocase subunit SecE (62 aa).

A helical membrane pass occupies residues 40-60 (LLVLAVVGVLAYIIQLALTLI).

The protein belongs to the SecE/SEC61-gamma family. In terms of assembly, component of the Sec protein translocase complex. Heterotrimer consisting of SecY (alpha), SecG (beta) and SecE (gamma) subunits. The heterotrimers can form oligomers, although 1 heterotrimer is thought to be able to translocate proteins. Interacts with the ribosome. May interact with SecDF, and other proteins may be involved.

Its subcellular location is the cell membrane. Essential subunit of the Sec protein translocation channel SecYEG. Clamps together the 2 halves of SecY. May contact the channel plug during translocation. In Saccharolobus solfataricus (strain ATCC 35092 / DSM 1617 / JCM 11322 / P2) (Sulfolobus solfataricus), this protein is Protein translocase subunit SecE.